The sequence spans 957 residues: Dystrophin-related protein 2 (957 aa).

2 Spectrin repeats span residues 102 to 179 (DHSG…EELE) and 231 to 337 (EHLL…QLQD). The WW domain maps to 358-383 (WERAISPNKVPYYINHQAQTTCWDHP). The ZZ-type; degenerate zinc finger occupies 605–661 (KHQTKCSICRQCPIKGFRYRSLKQFNVDICQTCFLTGKASKGNKLHYPIMEYYTPTT). Residues C610, C613, C634, and C637 each coordinate Zn(2+). Phosphoserine is present on S748. The span at 877–894 (PPTESDGNGSAGSSLASS) shows a compositional bias: low complexity. The segment at 877–923 (PPTESDGNGSAGSSLASSPRQSEGSHPREKGQTTPDTEAADDVGSKS) is disordered. T910 is subject to Phosphothreonine.

As to quaternary structure, interacts with PRX; this enhances phosphorylation. Identified in a dystroglycan complex that contains at least PRX, DRP2, UTRN, DMD and DAG1. As to expression, detected in trigeminal nerve Schwann cells. Detected in brain cortex and hippocampus. Detected in brain membrane fractions and highly enriched in the postsynaptic density (at protein level).

It localises to the postsynaptic density. The protein localises to the cell projection. The protein resides in the dendrite. It is found in the perikaryon. Its subcellular location is the cell membrane. Required for normal myelination and for normal organization of the cytoplasm and the formation of Cajal bands in myelinating Schwann cells. Required for normal PRX location at appositions between the abaxonal surface of the myelin sheath and the Schwann cell plasma membrane. Possibly involved in membrane-cytoskeleton interactions of the central nervous system. The polypeptide is Dystrophin-related protein 2 (Drp2) (Rattus norvegicus (Rat)).